The primary structure comprises 210 residues: Calcineurin B-like protein 4 (210 aa).

G2 carries the N-myristoyl glycine lipid modification. EF-hand domains are found at residues 31–66, 67–102, 104–139, and 148–183; these read EVEA…RNSR, KANL…FHPK, PKSE…LLDE, and AVEA…NPAS. Residues D161, N163, D165, R167, and E172 each coordinate Ca(2+).

This sequence belongs to the calcineurin regulatory subunit family. In terms of assembly, homodimer. Interacts with CIPK24. As to expression, expressed in leaves.

It localises to the cell membrane. Acts as a calcium sensor involved in the regulatory pathway for the control of intracellular Na(+) and K(+) homeostasis and salt tolerance. Operates in synergy with CIPK24 to activate the plasma membrane Na(+)/H(+) antiporter SOS1. May function as positive regulator of salt stress responses. CBL proteins interact with CIPK serine-threonine protein kinases. Binding of a CBL protein to the regulatory NAF domain of a CIPK protein lead to the activation of the kinase in a calcium-dependent manner. This chain is Calcineurin B-like protein 4 (CBL4), found in Oryza sativa subsp. japonica (Rice).